The primary structure comprises 226 residues: Enolase-phosphatase E1 (226 aa).

It belongs to the HAD-like hydrolase superfamily. MasA/MtnC family. As to quaternary structure, monomer. Mg(2+) is required as a cofactor.

The enzyme catalyses 5-methylsulfanyl-2,3-dioxopentyl phosphate + H2O = 1,2-dihydroxy-5-(methylsulfanyl)pent-1-en-3-one + phosphate. It functions in the pathway amino-acid biosynthesis; L-methionine biosynthesis via salvage pathway; L-methionine from S-methyl-5-thio-alpha-D-ribose 1-phosphate: step 3/6. The protein operates within amino-acid biosynthesis; L-methionine biosynthesis via salvage pathway; L-methionine from S-methyl-5-thio-alpha-D-ribose 1-phosphate: step 4/6. Functionally, bifunctional enzyme that catalyzes the enolization of 2,3-diketo-5-methylthiopentyl-1-phosphate (DK-MTP-1-P) into the intermediate 2-hydroxy-3-keto-5-methylthiopentenyl-1-phosphate (HK-MTPenyl-1-P), which is then dephosphorylated to form the acireductone 1,2-dihydroxy-3-keto-5-methylthiopentene (DHK-MTPene). This chain is Enolase-phosphatase E1, found in Shewanella amazonensis (strain ATCC BAA-1098 / SB2B).